The following is a 201-amino-acid chain: Acyl-homoserine-lactone synthase (201 aa).

This sequence belongs to the autoinducer synthase family.

It catalyses the reaction a fatty acyl-[ACP] + S-adenosyl-L-methionine = an N-acyl-L-homoserine lactone + S-methyl-5'-thioadenosine + holo-[ACP] + H(+). In terms of biological role, required for the synthesis of BHL (N-butanoyl-L-homoserine lactone), and HHL (N-hexanoyl-L-homoserine lactone) autoinducer molecules which bind to RhlR and thus acts in elastase biosynthesis regulation. This Pseudomonas aeruginosa (strain ATCC 15692 / DSM 22644 / CIP 104116 / JCM 14847 / LMG 12228 / 1C / PRS 101 / PAO1) protein is Acyl-homoserine-lactone synthase (rhlI).